The primary structure comprises 610 residues: Autophagy-related protein 22-1 (610 aa).

The segment covering 1–11 (MAFTPSSPPSP) has biased composition (pro residues). The tract at residues 1-29 (MAFTPSSPPSPAADASQRPSRYPGEDTTP) is disordered. Residues 35 to 55 (ILGWYAYGIAAEVFAVCGVGS) form a helical membrane-spanning segment. Residue Asn-90 is glycosylated (N-linked (GlcNAc...) asparagine). 3 consecutive transmembrane segments (helical) span residues 120-140 (SFAMYTFSLAVLVQALTLISF), 152-171 (TLLLAFGFIGSATSMLFVFV), and 189-209 (CLGSSFVVLNSFLPVLVANDP). The tract at residues 229-265 (GQFEPRDSFSERNPEFESQYTPGIGLGSKPSTNATSP) is disordered. A compositionally biased stretch (basic and acidic residues) spans 232 to 243 (EPRDSFSERNPE). An N-linked (GlcNAc...) asparagine glycan is attached at Asn-261. 8 helical membrane passes run 278–298 (VGLGYCAAVLVQILSIGLLFA), 310–330 (TLPLRFVLLLVGIWWFSFTMV), 384–404 (VFLVAWFLLSDAIATVSGTAI), 418–438 (VGCLSITATLSGMTGAFLWPV), 453–473 (LCIALFEIIPLYGMLAYIPLF), 488–510 (FPLAIVHGIVSGGLSSYCRSFFG), 522–544 (YALYAATDKGSSVIGPAIVGMLI), and 553–573 (GFFFIAILIVLPIPLVWMVNA). A disordered region spans residues 588-610 (AKGQESETGEPGEEAEGLLARGA). A compositionally biased stretch (acidic residues) spans 594 to 603 (ETGEPGEEAE).

Belongs to the ATG22 family.

The protein localises to the vacuole membrane. Functionally, vacuolar effluxer which mediate the efflux of amino acids resulting from autophagic degradation. The release of autophagic amino acids allows the maintenance of protein synthesis and viability during nitrogen starvation. The chain is Autophagy-related protein 22-1 (atg22-1) from Aspergillus terreus (strain NIH 2624 / FGSC A1156).